The chain runs to 425 residues: Sucrose-phosphatase 1 (425 aa).

Belongs to the sucrose phosphatase family. As to quaternary structure, homodimer. The cofactor is Mg(2+).

It carries out the reaction sucrose 6(F)-phosphate + H2O = sucrose + phosphate. Its pathway is glycan biosynthesis; sucrose biosynthesis; sucrose from D-fructose 6-phosphate and UDP-alpha-D-glucose: step 2/2. With respect to regulation, inhibited by EDTA. Catalyzes the final step of sucrose synthesis. This chain is Sucrose-phosphatase 1 (SPP1), found in Nicotiana tabacum (Common tobacco).